A 48-amino-acid polypeptide reads, in one-letter code: Palustrin-3a (48 aa).

Residues Cys-43 and Cys-48 are joined by a disulfide bond.

As to expression, expressed by the skin glands.

It is found in the secreted. Antimicrobial activity against Gram-negative bacterium E.coli. This chain is Palustrin-3a, found in Lithobates palustris (Pickerel frog).